A 206-amino-acid chain; its full sequence is Nucleoside triphosphate pyrophosphatase (206 aa).

Catalysis depends on Asp71, which acts as the Proton acceptor.

The protein belongs to the Maf family. Requires a divalent metal cation as cofactor.

The protein resides in the cytoplasm. It catalyses the reaction a ribonucleoside 5'-triphosphate + H2O = a ribonucleoside 5'-phosphate + diphosphate + H(+). It carries out the reaction a 2'-deoxyribonucleoside 5'-triphosphate + H2O = a 2'-deoxyribonucleoside 5'-phosphate + diphosphate + H(+). Its function is as follows. Nucleoside triphosphate pyrophosphatase. May have a dual role in cell division arrest and in preventing the incorporation of modified nucleotides into cellular nucleic acids. This Rippkaea orientalis (strain PCC 8801 / RF-1) (Cyanothece sp. (strain PCC 8801)) protein is Nucleoside triphosphate pyrophosphatase.